Here is a 572-residue protein sequence, read N- to C-terminus: Proline--tRNA ligase (572 aa).

It belongs to the class-II aminoacyl-tRNA synthetase family. ProS type 1 subfamily. Homodimer.

Its subcellular location is the cytoplasm. The catalysed reaction is tRNA(Pro) + L-proline + ATP = L-prolyl-tRNA(Pro) + AMP + diphosphate. Functionally, catalyzes the attachment of proline to tRNA(Pro) in a two-step reaction: proline is first activated by ATP to form Pro-AMP and then transferred to the acceptor end of tRNA(Pro). As ProRS can inadvertently accommodate and process non-cognate amino acids such as alanine and cysteine, to avoid such errors it has two additional distinct editing activities against alanine. One activity is designated as 'pretransfer' editing and involves the tRNA(Pro)-independent hydrolysis of activated Ala-AMP. The other activity is designated 'posttransfer' editing and involves deacylation of mischarged Ala-tRNA(Pro). The misacylated Cys-tRNA(Pro) is not edited by ProRS. The protein is Proline--tRNA ligase of Serratia proteamaculans (strain 568).